The primary structure comprises 466 residues: UDP-N-acetylmuramate--L-alanine ligase (466 aa).

Position 119–125 (119–125) interacts with ATP; it reads GTHGKTT.

It belongs to the MurCDEF family.

The protein resides in the cytoplasm. The enzyme catalyses UDP-N-acetyl-alpha-D-muramate + L-alanine + ATP = UDP-N-acetyl-alpha-D-muramoyl-L-alanine + ADP + phosphate + H(+). The protein operates within cell wall biogenesis; peptidoglycan biosynthesis. Cell wall formation. This chain is UDP-N-acetylmuramate--L-alanine ligase, found in Cytophaga hutchinsonii (strain ATCC 33406 / DSM 1761 / CIP 103989 / NBRC 15051 / NCIMB 9469 / D465).